A 785-amino-acid polypeptide reads, in one-letter code: Phosphoinositide phosphatase SAC5 (785 aa).

Residues 158–533 (LSVVDLSKNF…GNTLAMQYGG (376 aa)) form the SAC domain. The Phosphatase catalytic core signature appears at 469–480 (RTNCIDCLDRTN). Polar residues predominate over residues 688 to 700 (GSGQMFQGSSSNS). The segment at 688–707 (GSGQMFQGSSSNSDSHRPND) is disordered.

In terms of assembly, component of the PI(3,5)P2 regulatory complex at least composed of ATG18, SAC/FIG4, FAB1 and VAC14. Mg(2+) is required as a cofactor. In terms of tissue distribution, ubiquitous with a higher level of expression in young seedlings than in other tissues.

It localises to the vacuole membrane. The catalysed reaction is a 1,2-diacyl-sn-glycero-3-phospho-(1D-myo-inositol-3,5-bisphosphate) + H2O = a 1,2-diacyl-sn-glycero-3-phospho-(1D-myo-inositol-3-phosphate) + phosphate. Its function is as follows. The PI(3,5)P2 regulatory complex regulates both the synthesis and turnover of phosphatidylinositol 3,5-bisphosphate (PtdIns(3,5)P2). The sequence is that of Phosphoinositide phosphatase SAC5 (SAC5) from Arabidopsis thaliana (Mouse-ear cress).